A 50-amino-acid chain; its full sequence is U3-ctenitoxin-Asp1a (50 aa).

In terms of tissue distribution, expressed by the venom gland.

It localises to the secreted. Its function is as follows. Possible neurotoxin. The polypeptide is U3-ctenitoxin-Asp1a (Ancylometes sp. (South American fishing spider)).